Here is a 305-residue protein sequence, read N- to C-terminus: Ornithine carbamoyltransferase (305 aa).

Carbamoyl phosphate contacts are provided by residues 47–50 (STRT), R98, and 125–128 (HPCQ). L-ornithine contacts are provided by residues N156, D221, and 225–226 (SM). Carbamoyl phosphate contacts are provided by residues 262–263 (CL) and R290.

The protein belongs to the aspartate/ornithine carbamoyltransferase superfamily. OTCase family.

Its subcellular location is the cytoplasm. It carries out the reaction carbamoyl phosphate + L-ornithine = L-citrulline + phosphate + H(+). It functions in the pathway amino-acid biosynthesis; L-arginine biosynthesis; L-arginine from L-ornithine and carbamoyl phosphate: step 1/3. Its function is as follows. Reversibly catalyzes the transfer of the carbamoyl group from carbamoyl phosphate (CP) to the N(epsilon) atom of ornithine (ORN) to produce L-citrulline. The sequence is that of Ornithine carbamoyltransferase from Methanococcus vannielii (strain ATCC 35089 / DSM 1224 / JCM 13029 / OCM 148 / SB).